The sequence spans 216 residues: Probable transaldolase (216 aa).

The active-site Schiff-base intermediate with substrate is Lys83.

This sequence belongs to the transaldolase family. Type 3B subfamily.

It is found in the cytoplasm. The enzyme catalyses D-sedoheptulose 7-phosphate + D-glyceraldehyde 3-phosphate = D-erythrose 4-phosphate + beta-D-fructose 6-phosphate. It participates in carbohydrate degradation; pentose phosphate pathway; D-glyceraldehyde 3-phosphate and beta-D-fructose 6-phosphate from D-ribose 5-phosphate and D-xylulose 5-phosphate (non-oxidative stage): step 2/3. Transaldolase is important for the balance of metabolites in the pentose-phosphate pathway. This Sphingopyxis alaskensis (strain DSM 13593 / LMG 18877 / RB2256) (Sphingomonas alaskensis) protein is Probable transaldolase.